The chain runs to 238 residues: Isoprene-epoxide--glutathione S-transferase (238 aa).

The 76-residue stretch at 7-82 (YVPAWGIPDI…YLKNKFGDKL (76 aa)) folds into the GST N-terminal domain. The GST C-terminal domain occupies 118-238 (DAGWETYIPF…LERIRKQYDI (121 aa)).

The protein belongs to the GST superfamily. In terms of assembly, homodimer.

The enzyme catalyses 2-glutathionyl-2-methylbut-3-en-1-ol = (3R)-3,4-epoxy-3-methylbut-1-ene + glutathione. With respect to regulation, activity is inhibited by 1,2-epoxyhexane. Functionally, involved in isoprene degradation. Catalyzes the glutathione-dependent ring opening of various epoxides. The highest conversion rate is observed with the physiological substrate, 3,4-epoxy-3-methyl-1-butene, which is the primary oxidation product of isoprene. It can also use other epoxides, including epoxyethane, epoxypropane, epithiopropane, epichlorohydrin, epifluorohydrin, epibromohydrin, 1,2-epoxybutane, 1,2-epoxyhexane, cis-2,3-epoxybutane, cis-1,2-dichloroepoxyethane and trans-1,2-dichloroepoxyethane. This is Isoprene-epoxide--glutathione S-transferase from Rhodococcus sp. (strain AD45).